An 82-amino-acid polypeptide reads, in one-letter code: Cytochrome b559 subunit alpha (82 aa).

Residues 22–36 (VIHFVTLPSIFLAGF) form a helical membrane-spanning segment. Histidine 24 serves as a coordination point for heme.

This sequence belongs to the PsbE/PsbF family. In terms of assembly, heterodimer of an alpha subunit and a beta subunit. PSII is composed of 1 copy each of membrane proteins PsbA, PsbB, PsbC, PsbD, PsbE, PsbF, PsbH, PsbI, PsbJ, PsbK, PsbL, PsbM, PsbT, PsbX, PsbY, PsbZ, Psb30/Ycf12, peripheral proteins PsbO, CyanoQ (PsbQ), PsbU, PsbV and a large number of cofactors. It forms dimeric complexes. The cofactor is heme b.

Its subcellular location is the cellular thylakoid membrane. Its function is as follows. This b-type cytochrome is tightly associated with the reaction center of photosystem II (PSII). PSII is a light-driven water:plastoquinone oxidoreductase that uses light energy to abstract electrons from H(2)O, generating O(2) and a proton gradient subsequently used for ATP formation. It consists of a core antenna complex that captures photons, and an electron transfer chain that converts photonic excitation into a charge separation. In Parasynechococcus marenigrum (strain WH8102), this protein is Cytochrome b559 subunit alpha.